A 512-amino-acid polypeptide reads, in one-letter code: SWI/SNF complex subunit SWI3A (512 aa).

The 98-residue stretch at 13–110 (YTIPAQSSWF…FSSSLKKNDH (98 aa)) folds into the SWIRM domain. Residues 223 to 274 (SAAAVWTEEEILLLLESVLKHGDDWELISQSVSTKSRLDCISKLIELPFGEF) enclose the SANT domain. The segment at 291 to 325 (DENTEQVQTDGQEHEETETREEKEDRVNEDEPPAK) is disordered. Residues 424-488 (ALGAAAAQAK…IEGVKETIIQ (65 aa)) are a coiled coil.

As to quaternary structure, homodimers and heterodimers. Interacts with SWI3B, SWI3C, BSH, and the C-terminus of FCA, but not with BRM or SWI3D. As to expression, expressed in roots, stems, leaves and flowers, but not in siliques.

It is found in the nucleus. Its function is as follows. Component of a multiprotein complex equivalent of the SWI/SNF complex, an ATP-dependent chromatin-remodeling complex, which is required for the positive and negative regulation of gene expression of a large number of genes. It changes chromatin structure by altering DNA-histone contacts within a nucleosome, leading eventually to a change in nucleosome position, thus facilitating or repressing binding of gene-specific transcription factors. The polypeptide is SWI/SNF complex subunit SWI3A (SWI3A) (Arabidopsis thaliana (Mouse-ear cress)).